Reading from the N-terminus, the 258-residue chain is Methionine aminopeptidase (258 aa).

His84 provides a ligand contact to substrate. Asp102, Asp113, and His176 together coordinate a divalent metal cation. His183 lines the substrate pocket. The a divalent metal cation site is built by Glu211 and Glu242.

Belongs to the peptidase M24A family. Methionine aminopeptidase type 1 subfamily. In terms of assembly, monomer. Co(2+) is required as a cofactor. It depends on Zn(2+) as a cofactor. The cofactor is Mn(2+). Requires Fe(2+) as cofactor.

The enzyme catalyses Release of N-terminal amino acids, preferentially methionine, from peptides and arylamides.. In terms of biological role, removes the N-terminal methionine from nascent proteins. The N-terminal methionine is often cleaved when the second residue in the primary sequence is small and uncharged (Met-Ala-, Cys, Gly, Pro, Ser, Thr, or Val). Requires deformylation of the N(alpha)-formylated initiator methionine before it can be hydrolyzed. The chain is Methionine aminopeptidase from Aquifex aeolicus (strain VF5).